The chain runs to 304 residues: Tritrans,polycis-undecaprenyl-diphosphate synthase (geranylgeranyl-diphosphate specific) (304 aa).

Residue aspartate 33 is part of the active site. Aspartate 33 contributes to the Mg(2+) binding site. Substrate is bound by residues glycine 34–arginine 37, lysine 46, histidine 50, and serine 78–glutamate 80. Asparagine 81 (proton acceptor) is an active-site residue. Substrate-binding positions include phenylalanine 82, arginine 84, arginine 203, and arginine 209–serine 211.

This sequence belongs to the UPP synthase family. Homodimer. Requires Mg(2+) as cofactor.

The enzyme catalyses geranylgeranyl diphosphate + 7 isopentenyl diphosphate = tri-trans,hepta-cis-undecaprenyl diphosphate + 7 diphosphate. Catalyzes the sequential condensation of isopentenyl diphosphate (IPP) with geranylgeranyl diphosphate (GGPP) to yield (2Z,6Z,10Z,14Z,18Z,22Z,26Z,30E,34E,38E)-undecaprenyl diphosphate (tritrans,heptacis-UPP). It is probably the precursor of glycosyl carrier lipids. The polypeptide is Tritrans,polycis-undecaprenyl-diphosphate synthase (geranylgeranyl-diphosphate specific) (Haloarcula marismortui (strain ATCC 43049 / DSM 3752 / JCM 8966 / VKM B-1809) (Halobacterium marismortui)).